A 37-amino-acid polypeptide reads, in one-letter code: Kappa-actitoxin-Bcs3b (37 aa).

Residues 2–37 enclose the ShKT domain; it reads CKDGFPTATCQHAKLVGNCKNSQKYRANCAKTCGPC. 3 cysteine pairs are disulfide-bonded: Cys-2/Cys-37, Cys-11/Cys-30, and Cys-20/Cys-34. The segment at 25-26 is crucial for binding to potassium channels; the sequence is KY.

The protein belongs to the sea anemone type 1 potassium channel toxin family. Type 1b subfamily.

The protein resides in the secreted. Its subcellular location is the nematocyst. In terms of biological role, inhibits voltage-gated potassium channels (IC(50)=14.42 nM for rKCNA1/Kv1.1, IC(50)=80.4 nM for rKCNA2/Kv1.2, IC(50)=7.76 nM for rKCNA6/Kv1.6, IC(50)=13.12 nM for hKCNA3/Kv1.3, and IC(50)=49.14 nM for insect Shaker IR). Binds the Shaker IR channels in a voltage-independent manner. The sequence is that of Kappa-actitoxin-Bcs3b from Bunodosoma caissarum (Sea anemone).